The sequence spans 178 residues: Protein GrpE (178 aa).

It belongs to the GrpE family. In terms of assembly, homodimer.

Its subcellular location is the cytoplasm. In terms of biological role, participates actively in the response to hyperosmotic and heat shock by preventing the aggregation of stress-denatured proteins, in association with DnaK and GrpE. It is the nucleotide exchange factor for DnaK and may function as a thermosensor. Unfolded proteins bind initially to DnaJ; upon interaction with the DnaJ-bound protein, DnaK hydrolyzes its bound ATP, resulting in the formation of a stable complex. GrpE releases ADP from DnaK; ATP binding to DnaK triggers the release of the substrate protein, thus completing the reaction cycle. Several rounds of ATP-dependent interactions between DnaJ, DnaK and GrpE are required for fully efficient folding. This chain is Protein GrpE, found in Bordetella avium (strain 197N).